The chain runs to 329 residues: Nicotianamine synthase 8 (329 aa).

It belongs to the nicotianamine synthase (NAS)-like family. In terms of assembly, homotrimer.

The enzyme catalyses 3 S-adenosyl-L-methionine = nicotianamine + 3 S-methyl-5'-thioadenosine + 3 H(+). Its function is as follows. Synthesizes nicotianamine, a polyamine that is the first intermediate in the synthesis of the phytosiderophores of the mugineic acid type found in gramineae which serve as a sensor for the physiological iron status within the plant, and/or might be involved in the transport of iron. This chain is Nicotianamine synthase 8 (NAS8), found in Hordeum vulgare (Barley).